The sequence spans 527 residues: Zinc finger imprinted 2 (527 aa).

Over residues 1–16 (MYQPEDDNNSDVTSDD) the composition is skewed to acidic residues. The disordered stretch occupies residues 1 to 104 (MYQPEDDNNS…SRSQDAESYQ (104 aa)). 3 stretches are compositionally biased toward basic and acidic residues: residues 17–26 (DMTRNRRESS), 35–56 (SGDR…DRWS), and 80–99 (FEMD…RSQD). One can recognise a KRAB domain in the interval 176–246 (VTFEDVLVDF…ETDSRHTVIC (71 aa)). The tract at residues 247 to 322 (QGESHDDPLE…GICTSPQSAS (76 aa)) is disordered. A compositionally biased stretch (polar residues) spans 259-275 (QGNQEKLLTPITMNDPK). A compositionally biased stretch (basic and acidic residues) spans 297–307 (QSKDPLGKDPQ). 5 consecutive C2H2-type zinc fingers follow at residues 328-350 (NRCE…ERIH), 356-378 (YECK…QKTH), 412-434 (FECF…LKAH), 466-488 (CQCC…YRTH), and 494-516 (YQCQ…YQLH).

It belongs to the krueppel C2H2-type zinc-finger protein family. Highest levels of expression in adult testis; modest levels in fetal kidney and brain.

It is found in the nucleus. May be involved in transcriptional regulation. The sequence is that of Zinc finger imprinted 2 (ZIM2) from Homo sapiens (Human).